The primary structure comprises 178 residues: Large ribosomal subunit protein uL6 (178 aa).

It belongs to the universal ribosomal protein uL6 family. As to quaternary structure, part of the 50S ribosomal subunit.

In terms of biological role, this protein binds to the 23S rRNA, and is important in its secondary structure. It is located near the subunit interface in the base of the L7/L12 stalk, and near the tRNA binding site of the peptidyltransferase center. The sequence is that of Large ribosomal subunit protein uL6 from Campylobacter fetus subsp. fetus (strain 82-40).